The sequence spans 638 residues: Octopamine receptor 1 (638 aa).

Topologically, residues 1–28 (MSRDIFMKRLRLHLLFDEVAMVTHIVGD) are extracellular. The chain crosses the membrane as a helical span at residues 29 to 53 (VLSSVLLCAVVLLVLVGNTLVVAAV). The Cytoplasmic segment spans residues 54–64 (ATSRKLRTVTN). The chain crosses the membrane as a helical span at residues 65–87 (VFIVNLACADLLLGVLVLPFSAV). The Extracellular segment spans residues 88 to 102 (NEIKDVWIFGHVWCQ). A disulfide bridge connects residues Cys-101 and Cys-230. The chain crosses the membrane as a helical span at residues 103 to 124 (VWLAVDVWLCTASILNLCCISL). Over 125-147 (DRYLAITRPIRYPGLMSAKRAKT) the chain is Cytoplasmic. Residues 148 to 167 (LVAGVWLFSFVICCPPLIGW) traverse the membrane as a helical segment. Topologically, residues 168–239 (NDGGDGIMDY…CELTNSRGYR (72 aa)) are extracellular. Asn-178, Asn-207, and Asn-215 each carry an N-linked (GlcNAc...) asparagine glycan. A helical transmembrane segment spans residues 240–259 (IYAALGSFFIPMLVMVFFYL). Over 260–520 (QIYRAAVKTI…FNREKKAAKT (261 aa)) the chain is Cytoplasmic. A helical membrane pass occupies residues 521 to 545 (LAIIVGAFIMCWMPFFTIYLVGAFC). The Extracellular segment spans residues 546 to 551 (ENCISP). The helical transmembrane segment at 552–575 (IVFSVAFWLGYCNSAMNPCVYALF) threads the bilayer. Over 576 to 638 (SRDFRFAFRK…TASGGNGGYT (63 aa)) the chain is Cytoplasmic. Positions 618 to 638 (DDAKSSSDIGPTASGGNGGYT) are disordered.

It belongs to the G-protein coupled receptor 1 family. In terms of tissue distribution, expressed in the central nervous system.

It localises to the cell membrane. In terms of biological role, G-protein coupled receptor for octopamine (OA), which is a neurotransmitter, neurohormone, and neuromodulator in invertebrates. Activation of this receptor by octopamine induces an increase in both inositol phosphates and cyclic AMP. The coupling to adenylyl cyclase seems to be less efficient than the coupling to phospholipase C. The rank order of potency for agonists is p-synephrine &gt;= clonidine &gt; p-octopamine = xylometazoline = phenylephrine = oxymetazoline &gt; B-HT920 &gt; serotonin = p-tyramine &gt; epinephrine &gt; norepinephrine &gt; methoxamine = dopamine = histamine. For antagonists, the rank order is yohimbine &gt; chlopromazine / spiperone &gt; phentolamine &gt; mianserine &gt; rauwolscine &gt; prazosin &gt; alprenolol / propanolol &gt; pindolol. The protein is Octopamine receptor 1 of Lymnaea stagnalis (Great pond snail).